We begin with the raw amino-acid sequence, 324 residues long: Probable pectinesterase A (324 aa).

An N-terminal signal peptide occupies residues 1-19 (MHGSLLKLALLSFSLASSA). Q142 lines the substrate pocket. The active-site Proton donor is the D165. D186 functions as the Nucleophile in the catalytic mechanism. Substrate contacts are provided by R246 and W248. N285 carries an N-linked (GlcNAc...) asparagine glycan.

The protein belongs to the pectinesterase family.

The protein resides in the secreted. The enzyme catalyses [(1-&gt;4)-alpha-D-galacturonosyl methyl ester](n) + n H2O = [(1-&gt;4)-alpha-D-galacturonosyl](n) + n methanol + n H(+). Its pathway is glycan metabolism; pectin degradation; 2-dehydro-3-deoxy-D-gluconate from pectin: step 1/5. Functionally, involved in maceration and soft-rotting of plant tissue. This Aspergillus flavus (strain ATCC 200026 / FGSC A1120 / IAM 13836 / NRRL 3357 / JCM 12722 / SRRC 167) protein is Probable pectinesterase A (pmeA).